A 240-amino-acid polypeptide reads, in one-letter code: Phosphoribosylaminoimidazole-succinocarboxamide synthase (240 aa).

Belongs to the SAICAR synthetase family.

The enzyme catalyses 5-amino-1-(5-phospho-D-ribosyl)imidazole-4-carboxylate + L-aspartate + ATP = (2S)-2-[5-amino-1-(5-phospho-beta-D-ribosyl)imidazole-4-carboxamido]succinate + ADP + phosphate + 2 H(+). The protein operates within purine metabolism; IMP biosynthesis via de novo pathway; 5-amino-1-(5-phospho-D-ribosyl)imidazole-4-carboxamide from 5-amino-1-(5-phospho-D-ribosyl)imidazole-4-carboxylate: step 1/2. The polypeptide is Phosphoribosylaminoimidazole-succinocarboxamide synthase (Wolbachia sp. subsp. Drosophila simulans (strain wRi)).